We begin with the raw amino-acid sequence, 56 residues long: Large ribosomal subunit protein bL33 (56 aa).

The protein belongs to the bacterial ribosomal protein bL33 family.

The protein is Large ribosomal subunit protein bL33 of Actinobacillus succinogenes (strain ATCC 55618 / DSM 22257 / CCUG 43843 / 130Z).